A 280-amino-acid chain; its full sequence is Dexamethasone-induced Ras-related protein 1 (280 aa).

S-nitrosocysteine is present on Cys-11. 31–38 lines the GTP pocket; sequence GSSKVGKT. An Effector region motif is present at residues 53 to 61; that stretch reads YTPTIEDFH. GTP contacts are provided by residues 78 to 82 and 145 to 148; these read DTSGN and NKGD. Cys-277 bears the Cysteine methyl ester mark. Residue Cys-277 is the site of S-farnesyl cysteine attachment. The propeptide at 278 to 280 is removed in mature form; it reads VIS.

It belongs to the small GTPase superfamily. RasD family. In terms of assembly, component of a complex, at least composed of APBB1, RASD1/DEXRAS1 and APP. Interacts with APBB1/FE65. Forms a ternary complex with CAPON and NOS1. Post-translationally, S-nitrosylation stimulates guanine-nucleotide exchange activity. As to expression, expressed in brain, heart, kidney and liver.

The protein localises to the cell membrane. The protein resides in the cytoplasm. Its subcellular location is the perinuclear region. It is found in the nucleus. Small GTPase. Negatively regulates the transcription regulation activity of the APBB1/FE65-APP complex via its interaction with APBB1/FE65. In Mus musculus (Mouse), this protein is Dexamethasone-induced Ras-related protein 1 (Rasd1).